We begin with the raw amino-acid sequence, 795 residues long: MLPVVPVFNAVNALKEKTYLYLSSQLVLDGKDMTKDDILEFVQNSHGQNISVLLKDAKFEDDDLIVLLNNGVVTLFIDSDDYAAHLVEIGVPSIRLTLLKDGAYQFSFGQIQEIQQSQLVKASEISLETFTNSVLSGMKTDRPDGLYTTLVVDENERSLGLVYSNKESVSLAIETQTGIYFSRSRNEIWRKGATSGNVQKLLSIELDCDGDALKFVVRQGGSGSFCHLETESCFGNFRHGLYGLQKLLQERLLNAPEGSYTKRLFNDSDLLTAKIKEEAEELTEAVDKKDIAWECADLFYFAMARLVANGVSLEDVERNLNTKHLKITRRKGDAKPKFLKKEPVAVHEEDGKIVLNVVSASDKAAVEKAVTRPIQKTAEIMNLVNPIIENVIKNGDKALVELTAKFDGVQLETPVLEAPYPEEYLDGLTDELRDALDLSIENVKKFHAAQMQSETLDVETQPGVVCSRFPRPIEKVGLYIPGGTAILPSTALMLGVPAQVAGCKEIVFASPPRKSDGRVSPEVVYVASKVGASKIVLAGGAQAIAAMAYGTESVPKVDKILGPGNQFVTAAKMYVQNDTQALCSIDMPAGPSEVLVICDEEADVDFVASDLLSQAEHGIDSQVILVGVSLSDSKIEALQNAVHEQAMQLPRVDIVRKCIAHSSIILCDSYEEAFKMSNQYAPEHLILQISNAEDYVKDVDHAGSIFVGAYTPESCGDYSSGTNHTLPTYGYARQYSGVNTATFQKFITSQVVTPVGLEHIGHAVMSVAKVEGLDAHRNAVKIRMSKLGLLPSGFE.

The segment at 1–225 (MLPVVPVFNA…VVRQGGSGSF (225 aa)) is phosphoribosyl-AMP cyclohydrolase. Residues 226 to 308 (CHLETESCFG…FYFAMARLVA (83 aa)) form a phosphoribosyl-ATP pyrophosphohydrolase region. The interval 309-795 (NGVSLEDVER…KLGLLPSGFE (487 aa)) is histidinol dehydrogenase. Residues Gln-614 and His-617 each coordinate Zn(2+). Active-site residues include Glu-683 and His-684. Positions 717 and 776 each coordinate Zn(2+).

It in the C-terminal section; belongs to the histidinol dehydrogenase family. It depends on Zn(2+) as a cofactor.

It catalyses the reaction 1-(5-phospho-beta-D-ribosyl)-5'-AMP + H2O = 1-(5-phospho-beta-D-ribosyl)-5-[(5-phospho-beta-D-ribosylamino)methylideneamino]imidazole-4-carboxamide. The enzyme catalyses 1-(5-phospho-beta-D-ribosyl)-ATP + H2O = 1-(5-phospho-beta-D-ribosyl)-5'-AMP + diphosphate + H(+). It carries out the reaction L-histidinol + 2 NAD(+) + H2O = L-histidine + 2 NADH + 3 H(+). It participates in amino-acid biosynthesis; L-histidine biosynthesis; L-histidine from 5-phospho-alpha-D-ribose 1-diphosphate: step 2/9. Its pathway is amino-acid biosynthesis; L-histidine biosynthesis; L-histidine from 5-phospho-alpha-D-ribose 1-diphosphate: step 3/9. It functions in the pathway amino-acid biosynthesis; L-histidine biosynthesis; L-histidine from 5-phospho-alpha-D-ribose 1-diphosphate: step 9/9. This Kluyveromyces lactis (strain ATCC 8585 / CBS 2359 / DSM 70799 / NBRC 1267 / NRRL Y-1140 / WM37) (Yeast) protein is Histidine biosynthesis trifunctional protein (HIS4).